A 139-amino-acid polypeptide reads, in one-letter code: Small ribosomal subunit protein uS19 (139 aa).

The protein belongs to the universal ribosomal protein uS19 family.

Functionally, protein S19 forms a complex with S13 that binds strongly to the 16S ribosomal RNA. This Methanoregula boonei (strain DSM 21154 / JCM 14090 / 6A8) protein is Small ribosomal subunit protein uS19.